The sequence spans 188 residues: Pyridoxal 5'-phosphate synthase subunit PdxT (188 aa).

Residue 47-49 (GES) coordinates L-glutamine. Cys79 acts as the Nucleophile in catalysis. L-glutamine contacts are provided by residues Arg105 and 134–135 (IR). Catalysis depends on charge relay system residues His170 and Glu172.

Belongs to the glutaminase PdxT/SNO family. In the presence of PdxS, forms a dodecamer of heterodimers. Only shows activity in the heterodimer.

It carries out the reaction aldehydo-D-ribose 5-phosphate + D-glyceraldehyde 3-phosphate + L-glutamine = pyridoxal 5'-phosphate + L-glutamate + phosphate + 3 H2O + H(+). The catalysed reaction is L-glutamine + H2O = L-glutamate + NH4(+). Its pathway is cofactor biosynthesis; pyridoxal 5'-phosphate biosynthesis. Its function is as follows. Catalyzes the hydrolysis of glutamine to glutamate and ammonia as part of the biosynthesis of pyridoxal 5'-phosphate. The resulting ammonia molecule is channeled to the active site of PdxS. This is Pyridoxal 5'-phosphate synthase subunit PdxT from Listeria monocytogenes serovar 1/2a (strain ATCC BAA-679 / EGD-e).